We begin with the raw amino-acid sequence, 244 residues long: 3-deoxy-manno-octulosonate cytidylyltransferase (244 aa).

It belongs to the KdsB family.

It is found in the cytoplasm. It catalyses the reaction 3-deoxy-alpha-D-manno-oct-2-ulosonate + CTP = CMP-3-deoxy-beta-D-manno-octulosonate + diphosphate. The protein operates within nucleotide-sugar biosynthesis; CMP-3-deoxy-D-manno-octulosonate biosynthesis; CMP-3-deoxy-D-manno-octulosonate from 3-deoxy-D-manno-octulosonate and CTP: step 1/1. Its pathway is bacterial outer membrane biogenesis; lipopolysaccharide biosynthesis. In terms of biological role, activates KDO (a required 8-carbon sugar) for incorporation into bacterial lipopolysaccharide in Gram-negative bacteria. The sequence is that of 3-deoxy-manno-octulosonate cytidylyltransferase from Wolinella succinogenes (strain ATCC 29543 / DSM 1740 / CCUG 13145 / JCM 31913 / LMG 7466 / NCTC 11488 / FDC 602W) (Vibrio succinogenes).